The following is an 88-amino-acid chain: Small ribosomal subunit protein uS19 (88 aa).

Belongs to the universal ribosomal protein uS19 family.

In terms of biological role, protein S19 forms a complex with S13 that binds strongly to the 16S ribosomal RNA. The polypeptide is Small ribosomal subunit protein uS19 (rpsS) (Mycoplasma capricolum subsp. capricolum (strain California kid / ATCC 27343 / NCTC 10154)).